Consider the following 254-residue polypeptide: RNA polymerase sigma-D factor (254 aa).

Positions 54 to 67 (DLMSLGMLGLYDAL) match the Polymerase core binding motif. Positions 220–239 (LTEIGQVLNLSTSRISQIHS) form a DNA-binding region, H-T-H motif.

As to quaternary structure, monomer. Interacts transiently with the RNAP core.

Sigma factors are initiation factors that promote the attachment of RNA polymerase (RNAP) to specific initiation sites and are then released. This alternative sigma factor is required for the transcription of the flagellin and motility genes as well as for wild-type chemotaxis. Associates with the RNAP core during all growth phases with a peak at the transition to stationary phase. The sequence is that of RNA polymerase sigma-D factor (sigD) from Bacillus subtilis (strain 168).